A 214-amino-acid polypeptide reads, in one-letter code: Outer-membrane lipoprotein LolB (214 aa).

An N-terminal signal peptide occupies residues 1–25 (MNNLKRFTKSIFSCIALSGLLFLGG). Residue cysteine 26 is the site of N-palmitoyl cysteine attachment. Cysteine 26 carries the S-diacylglycerol cysteine lipid modification.

It belongs to the LolB family. Monomer.

The protein resides in the cell outer membrane. In terms of biological role, plays a critical role in the incorporation of lipoproteins in the outer membrane after they are released by the LolA protein. The chain is Outer-membrane lipoprotein LolB from Shewanella sp. (strain MR-7).